Here is a 791-residue protein sequence, read N- to C-terminus: Nuclear cap-binding protein subunit 1-B (791 aa).

The tract at residues 1 to 24 is disordered; it reads MSRRRHSDENDGGQPHKRRRTSEP. Residues 28–240 form the MIF4G domain; that stretch reads EDRLESLICR…CLWAQVQKLK (213 aa). Residues 641-714 adopt a coiled-coil conformation; it reads LHSTIRKMNK…SEQKNLFLVI (74 aa). The segment at 664-687 is disordered; it reads QRLAKQHKHRDSDDNDEDSGRKDG.

This sequence belongs to the NCBP1 family. In terms of assembly, component of the nuclear cap-binding complex (CBC), a heterodimer composed of ncbp1/cbp80 and ncbp2/cbp20 that interacts with m7GpppG-capped RNA. Component of an alternative nuclear cap-binding complex (CBC) composed of ncbp1/cbp80 and ncbp3.

The protein localises to the nucleus. It is found in the cytoplasm. Its function is as follows. Component of the cap-binding complex (CBC), which binds cotranscriptionally to the 5'-cap of pre-mRNAs and is involved in various processes such as pre-mRNA splicing, translation regulation, nonsense-mediated mRNA decay, RNA-mediated gene silencing (RNAi) by microRNAs (miRNAs) and mRNA export. The CBC complex is involved in mRNA export from the nucleus, leading to the recruitment of the mRNA export machinery to the 5'-end of mRNA and to mRNA export in a 5' to 3' direction through the nuclear pore. The CBC complex is also involved in mediating U snRNA and intronless mRNAs export from the nucleus. The CBC complex is essential for a pioneer round of mRNA translation, before steady state translation when the CBC complex is replaced by cytoplasmic cap-binding protein eIF4E. The pioneer round of mRNA translation mediated by the CBC complex plays a central role in nonsense-mediated mRNA decay (NMD), NMD only taking place in mRNAs bound to the CBC complex, but not on eIF4E-bound mRNAs. The CBC complex enhances NMD in mRNAs containing at least one exon-junction complex (EJC), promoting the interaction between UPF1 and UPF2. The CBC complex is also involved in 'failsafe' NMD, which is independent of the EJC complex, while it does not participate in Staufen-mediated mRNA decay (SMD). During cell proliferation, the CBC complex is also involved in microRNAs (miRNAs) biogenesis via its interaction with SRRT/ARS2 and is required for miRNA-mediated RNA interference. The CBC complex also acts as a negative regulator of parn, thereby acting as an inhibitor of mRNA deadenylation. In the CBC complex, NCBP1/CBP80 does not bind directly capped RNAs (m7GpppG-capped RNA) but is required to stabilize the movement of the N-terminal loop of NCBP2/CBP20 and lock the CBC into a high affinity cap-binding state with the cap structure. Associates with NCBP3 to form an alternative cap-binding complex (CBC) which plays a key role in mRNA export. The conventional CBC with NCBP2 binds both small nuclear RNA (snRNA) and messenger (mRNA) and is involved in their export from the nucleus whereas the alternative CBC with NCBP3 does not bind snRNA and associates only with mRNA thereby playing a role only in mRNA export. The polypeptide is Nuclear cap-binding protein subunit 1-B (ncbp1-b) (Xenopus laevis (African clawed frog)).